The sequence spans 341 residues: Barley B recombinant-like protein A (341 aa).

Positions 48 to 62 (HQHQQHVPHHHHQPH) are enriched in basic residues. 2 disordered regions span residues 48–95 (HQHQ…MNFA) and 150–234 (MQQQ…RKNI). A compositionally biased stretch (low complexity) spans 68–77 (GANGNANGGA). A compositionally biased stretch (pro residues) spans 78–90 (MPPPPATEAPPSM). Residues 190–211 (PKKRQQGRQPKVPRAKKPKKSA) show a composition bias toward basic residues.

Belongs to the BBR/BPC family.

The protein resides in the nucleus. Its function is as follows. Transcriptional regulator that specifically binds to GA-rich elements (GAGA-repeats) present in regulatory sequences of genes involved in developmental processes. This Oryza sativa subsp. japonica (Rice) protein is Barley B recombinant-like protein A.